The chain runs to 181 residues: Large ribosomal subunit protein uL30 (181 aa).

Belongs to the universal ribosomal protein uL30 family. In terms of assembly, part of the 50S ribosomal subunit.

The sequence is that of Large ribosomal subunit protein uL30 from Hyperthermus butylicus (strain DSM 5456 / JCM 9403 / PLM1-5).